A 309-amino-acid chain; its full sequence is Homoserine O-succinyltransferase (309 aa).

Cys142 acts as the Acyl-thioester intermediate in catalysis. 2 residues coordinate substrate: Lys163 and Ser192. Residue His235 is the Proton acceptor of the active site. Glu237 is a catalytic residue. A substrate-binding site is contributed by Arg249.

The protein belongs to the MetA family. In terms of assembly, homodimer.

The protein resides in the cytoplasm. It catalyses the reaction L-homoserine + succinyl-CoA = O-succinyl-L-homoserine + CoA. The protein operates within amino-acid biosynthesis; L-methionine biosynthesis via de novo pathway; O-succinyl-L-homoserine from L-homoserine: step 1/1. Its function is as follows. Transfers a succinyl group from succinyl-CoA to L-homoserine, forming succinyl-L-homoserine. In Escherichia coli (strain K12 / MC4100 / BW2952), this protein is Homoserine O-succinyltransferase.